The chain runs to 354 residues: Protein OVEREXPRESSOR OF CATIONIC PEROXIDASE 3 (354 aa).

The short motif at 63–70 (NRKGFVSS) is the Nuclear localization signal 1 element. Disordered regions lie at residues 65–98 (KGFV…EDPF) and 151–186 (TGDV…PTKL). Residues 154–181 (VDVDVDNDDDDNDDDDNDDDDDDSEEDE) are compositionally biased toward acidic residues. The Nuclear localization signal 2 signature appears at 191–198 (LKRLAYAL). Residues 243–264 (KPPVAAPENSSPDPSPVESLSA) are disordered. The segment at residues 286 to 345 (RWSAQKRVKKAHIETLEKVYRRSKRPTNAVVSSIVQVTNLPRKRVLKWFEDKRAEDGVPD) is a DNA-binding region (homeobox). The Nuclear localization signal 3 motif lies at 293–300 (VKKAHIET).

It localises to the nucleus. Its function is as follows. May modulate chromatin structure by regulation of nucleosome assembly/disassembly. Homeodomain transcription factor that mediates jasmonic acid (JA)-mediated COI1-dependent and abscisic acid (ABA)-mediated PMR4-dependent resistance to infection by necrotrophic fungal pathogens (e.g. B.cinerea and P.cucumerina) and bacterial pathogens (e.g. P.syringae DC3000); this resistance involves at least callose deposition. Required for the P.fluorescens WCS417r-triggered JA-dependent induced systemic resistance (ISR) against both P.syringae DC3000 and H.arabidopsidis. Negative regulator of the ABA-dependent drought resistance. In Arabidopsis thaliana (Mouse-ear cress), this protein is Protein OVEREXPRESSOR OF CATIONIC PEROXIDASE 3.